The sequence spans 151 residues: Large ribosomal subunit protein uL13 (151 aa).

It belongs to the universal ribosomal protein uL13 family. In terms of assembly, part of the 50S ribosomal subunit.

In terms of biological role, this protein is one of the early assembly proteins of the 50S ribosomal subunit, although it is not seen to bind rRNA by itself. It is important during the early stages of 50S assembly. The polypeptide is Large ribosomal subunit protein uL13 (Acaryochloris marina (strain MBIC 11017)).